The chain runs to 70 residues: UPF0270 protein VV1_1320 (70 aa).

This sequence belongs to the UPF0270 family.

This chain is UPF0270 protein VV1_1320, found in Vibrio vulnificus (strain CMCP6).